The following is a 139-amino-acid chain: Large ribosomal subunit protein uL16 (139 aa).

It belongs to the universal ribosomal protein uL16 family. Part of the 50S ribosomal subunit.

Its function is as follows. Binds 23S rRNA and is also seen to make contacts with the A and possibly P site tRNAs. This is Large ribosomal subunit protein uL16 from Prosthecochloris aestuarii (strain DSM 271 / SK 413).